The chain runs to 805 residues: Probable phosphoketolase (805 aa).

The protein belongs to the XFP family. Thiamine diphosphate is required as a cofactor.

The sequence is that of Probable phosphoketolase from Synechocystis sp. (strain ATCC 27184 / PCC 6803 / Kazusa).